A 20-amino-acid chain; its full sequence is Cicerin (20 aa).

Residues 1 to 20 form a disordered region; it reads ARCENFADSYRQPPISSSQT.

Has antifungal activity against B.cinerea, F.oxysporum and M.arachidicola. Inhibits cell-free translation in rabbit reticulocyte lysate system. This chain is Cicerin, found in Cicer arietinum (Chickpea).